Consider the following 246-residue polypeptide: Octanoyltransferase (246 aa).

The BPL/LPL catalytic domain occupies 38–213; sequence AQQSDEFWVL…FLAKRLGLTP (176 aa). Substrate-binding positions include 77-84, 144-146, and 157-159; these read RGGQVTYH, SLG, and GLA. The Acyl-thioester intermediate role is filled by Cys175. Residues 225–246 are disordered; it reads RQENVTTGGDPGSALTQQPERL.

The protein belongs to the LipB family.

Its subcellular location is the cytoplasm. The catalysed reaction is octanoyl-[ACP] + L-lysyl-[protein] = N(6)-octanoyl-L-lysyl-[protein] + holo-[ACP] + H(+). It functions in the pathway protein modification; protein lipoylation via endogenous pathway; protein N(6)-(lipoyl)lysine from octanoyl-[acyl-carrier-protein]: step 1/2. In terms of biological role, catalyzes the transfer of endogenously produced octanoic acid from octanoyl-acyl-carrier-protein onto the lipoyl domains of lipoate-dependent enzymes. Lipoyl-ACP can also act as a substrate although octanoyl-ACP is likely to be the physiological substrate. This Alcanivorax borkumensis (strain ATCC 700651 / DSM 11573 / NCIMB 13689 / SK2) protein is Octanoyltransferase.